The sequence spans 177 residues: Secretion monitor (177 aa).

An N-terminal signal peptide occupies residues 1–30 (MIGILNRWRQFGRRYFWPHLLLGMVAASLG).

This sequence belongs to the SecM family.

Its subcellular location is the cytoplasm. It is found in the cytosol. The protein localises to the periplasm. Regulates secA expression by translational coupling of the secM secA operon. Translational pausing at a specific Pro residue 5 residues before the end of the protein may allow disruption of a mRNA repressor helix that normally suppresses secA translation initiation. The sequence is that of Secretion monitor from Yersinia enterocolitica serotype O:8 / biotype 1B (strain NCTC 13174 / 8081).